Consider the following 1088-residue polypeptide: RNA-directed RNA polymerase (1088 aa).

The RdRp catalytic domain maps to 501 to 687 (LSYGDVTRFL…AKRYIAGGKI (187 aa)).

This sequence belongs to the reoviridae RNA-directed RNA polymerase family. Interacts with VP3 (Potential). Interacts with VP2; this interaction activates VP1. Interacts with NSP5; this interaction is probably necessary for the formation of functional virus factories. Interacts with NSP2; this interaction is weak. Mg(2+) is required as a cofactor.

It is found in the virion. The enzyme catalyses RNA(n) + a ribonucleoside 5'-triphosphate = RNA(n+1) + diphosphate. In terms of biological role, RNA-directed RNA polymerase that is involved in both transcription and genome replication. Together with VP3 capping enzyme, forms an enzyme complex positioned near the channels situated at each of the five-fold vertices of the core. Following infection, the outermost layer of the virus is lost, leaving a double-layered particle (DLP) made up of the core and VP6 shell. VP1 then catalyzes the transcription of fully conservative plus-strand genomic RNAs that are extruded through the DLP's channels into the cytoplasm where they function as mRNAs for translation of viral proteins. One copy of each of the viral (+)RNAs is also recruited during core assembly, together with newly synthesized polymerase complexes and VP2. The polymerase of these novo-formed particles catalyzes the synthesis of complementary minus-strands leading to dsRNA formation. To do so, the polymerase specifically recognizes and binds 4 bases 5'-UGUG-3' in the conserved 3'-sequence of plus-strand RNA templates. VP2 presumably activates the autoinhibited VP1-RNA complex to coordinate packaging and genome replication. Once dsRNA synthesis is complete, the polymerase switches to the transcriptional mode, thus providing secondary transcription. The protein is RNA-directed RNA polymerase of Bos taurus (Bovine).